The chain runs to 324 residues: 2-oxoisovalerate dehydrogenase subunit beta (324 aa).

Residues Glu29, 58–60, Gln82, and 86–89 each bind thiamine diphosphate; these read LSE and YIFP. Substrate contacts are provided by residues 83-86 and His129; that span reads FADY. Residue His129 is the Proton acceptor of the active site.

In terms of assembly, heterotetramer of two alpha and two beta chains. Directly associated with ODBA in the E1 complex. Requires thiamine diphosphate as cofactor.

It catalyses the reaction N(6)-[(R)-lipoyl]-L-lysyl-[protein] + 3-methyl-2-oxobutanoate + H(+) = N(6)-[(R)-S(8)-2-methylpropanoyldihydrolipoyl]-L-lysyl-[protein] + CO2. Functionally, the branched-chain alpha-keto dehydrogenase complex catalyzes the overall conversion of alpha-keto acids to acyl-CoA and CO(2). It contains multiple copies of three enzymatic components: branched-chain alpha-keto acid decarboxylase (E1), lipoamide acyltransferase (E2) and lipoamide dehydrogenase (E3). This is 2-oxoisovalerate dehydrogenase subunit beta from Thermus thermophilus (strain ATCC BAA-163 / DSM 7039 / HB27).